A 104-amino-acid polypeptide reads, in one-letter code: SPbeta prophage-derived stress response protein SCP1 (104 aa).

Its subcellular location is the cytoplasm. This chain is SPbeta prophage-derived stress response protein SCP1 (yorD), found in Bacillus subtilis (strain 168).